Here is a 193-residue protein sequence, read N- to C-terminus: Potassium-transporting ATPase KdpC subunit (193 aa).

Residues 7-27 form a helical membrane-spanning segment; the sequence is PLVVIFVVLTAVTGLAYPAVM.

Belongs to the KdpC family. The system is composed of three essential subunits: KdpA, KdpB and KdpC.

It is found in the cell inner membrane. Part of the high-affinity ATP-driven potassium transport (or Kdp) system, which catalyzes the hydrolysis of ATP coupled with the electrogenic transport of potassium into the cytoplasm. This subunit acts as a catalytic chaperone that increases the ATP-binding affinity of the ATP-hydrolyzing subunit KdpB by the formation of a transient KdpB/KdpC/ATP ternary complex. The polypeptide is Potassium-transporting ATPase KdpC subunit (Burkholderia ambifaria (strain ATCC BAA-244 / DSM 16087 / CCUG 44356 / LMG 19182 / AMMD) (Burkholderia cepacia (strain AMMD))).